The primary structure comprises 1663 residues: Centrosomal protein of 152 kDa (1663 aa).

Residues M1–H60 are disordered. Residues D44 to C57 are compositionally biased toward low complexity. Coiled-coil stretches lie at residues L266 to G516, E571 to L664, Q696 to K796, S843 to A886, D946 to K977, R1014 to L1047, and V1182 to M1288. 2 disordered regions span residues E1383–I1408 and K1595–G1628. Residues R1603–S1613 are compositionally biased toward polar residues.

The protein belongs to the CEP152 family.

Its subcellular location is the cytoplasm. It is found in the cytoskeleton. The protein resides in the microtubule organizing center. It localises to the centrosome. The protein localises to the centriole. Functionally, necessary for centrosome duplication; the function also seems to involve cep63, cdk5rap2 and wdr62 through a stepwise assembled complex at the centrosome that recruits cdk2 required for centriole duplication. Acts as a molecular scaffold facilitating the interaction of plk4 and cpap, 2 molecules involved in centriole formation. Also plays a key role in deuterosome-mediated centriole amplification in multiciliated that can generate more than 100 centrioles. Overexpression of cep152 can drive amplification of centrioles. The polypeptide is Centrosomal protein of 152 kDa (cep152) (Xenopus laevis (African clawed frog)).